Reading from the N-terminus, the 244-residue chain is 1-(5-phosphoribosyl)-5-[(5-phosphoribosylamino)methylideneamino] imidazole-4-carboxamide isomerase (244 aa).

The active-site Proton acceptor is the Asp15. The active-site Proton donor is the Asp136.

Belongs to the HisA/HisF family.

Its subcellular location is the cytoplasm. The catalysed reaction is 1-(5-phospho-beta-D-ribosyl)-5-[(5-phospho-beta-D-ribosylamino)methylideneamino]imidazole-4-carboxamide = 5-[(5-phospho-1-deoxy-D-ribulos-1-ylimino)methylamino]-1-(5-phospho-beta-D-ribosyl)imidazole-4-carboxamide. It participates in amino-acid biosynthesis; L-histidine biosynthesis; L-histidine from 5-phospho-alpha-D-ribose 1-diphosphate: step 4/9. This is 1-(5-phosphoribosyl)-5-[(5-phosphoribosylamino)methylideneamino] imidazole-4-carboxamide isomerase from Dehalococcoides mccartyi (strain CBDB1).